We begin with the raw amino-acid sequence, 452 residues long: Retrograde protein of 51 kDa (452 aa).

A compositionally biased stretch (basic and acidic residues) spans 1–13 (MQKGAKIEDEGRQ). Residues 1-50 (MQKGAKIEDEGRQSRIQSRNFIIQRSDPRTRGSSVYSSRSSSYNVRSSIS) are disordered. The tract at residues 1-75 (MQKGAKIEDE…KGNREKEKRE (75 aa)) is head. Residues 14–23 (SRIQSRNFII) are compositionally biased toward polar residues. Positions 33–50 (SSVYSSRSSSYNVRSSIS) are enriched in low complexity. The region spanning 72–424 (EKREMQNLNE…KLLEGEESRV (353 aa)) is the IF rod domain. The tract at residues 76-111 (MQNLNERLASYIEKVHFLDAQVKKLEAENEALRNRK) is coil 1A. The linker 1 stretch occupies residues 112–121 (VEDLQPIRDA). A coil 1B region spans residues 122 to 259 (YENELRQARK…DLLDQLELLK (138 aa)). S156 carries the sulfoserine modification. The linker 12 stretch occupies residues 260–278 (PEPIQIKGMDYADFWKSEL). Residues 279-424 (AKCVREINLA…KLLEGEESRV (146 aa)) form a coil 2 region. The segment at 425–452 (GLRTLVEQAIGTQSKGSASLKDAIQSSS) is tail.

This sequence belongs to the intermediate filament family.

The chain is Retrograde protein of 51 kDa (RGP51) from Lymnaea stagnalis (Great pond snail).